The primary structure comprises 424 residues: Enolase (424 aa).

(2R)-2-phosphoglycerate is bound at residue Gln-163. Glu-204 serves as the catalytic Proton donor. Mg(2+) is bound by residues Asp-241, Glu-284, and Asp-311. (2R)-2-phosphoglycerate-binding residues include Lys-336, Arg-365, Ser-366, and Lys-387. Lys-336 serves as the catalytic Proton acceptor.

The protein belongs to the enolase family. Mg(2+) serves as cofactor.

It is found in the cytoplasm. The protein localises to the secreted. It localises to the cell surface. It carries out the reaction (2R)-2-phosphoglycerate = phosphoenolpyruvate + H2O. It functions in the pathway carbohydrate degradation; glycolysis; pyruvate from D-glyceraldehyde 3-phosphate: step 4/5. In terms of biological role, catalyzes the reversible conversion of 2-phosphoglycerate (2-PG) into phosphoenolpyruvate (PEP). It is essential for the degradation of carbohydrates via glycolysis. The sequence is that of Enolase from Dictyoglomus thermophilum (strain ATCC 35947 / DSM 3960 / H-6-12).